An 88-amino-acid polypeptide reads, in one-letter code: Apolipoprotein C-I (88 aa).

Residues 1–26 (MRLILSLPVLAVVLAMVLEGPAPAQA) form the signal peptide.

Belongs to the apolipoprotein C1 family.

The protein localises to the secreted. In terms of biological role, inhibitor of lipoprotein binding to the low density lipoprotein (LDL) receptor, LDL receptor-related protein, and very low density lipoprotein (VLDL) receptor. Associates with high density lipoproteins (HDL) and the triacylglycerol-rich lipoproteins in the plasma and makes up about 10% of the protein of the VLDL and 2% of that of HDL. Appears to interfere directly with fatty acid uptake and is also the major plasma inhibitor of cholesteryl ester transfer protein (CETP). Binds free fatty acids and reduces their intracellular esterification. Modulates the interaction of APOE with beta-migrating VLDL and inhibits binding of beta-VLDL to the LDL receptor-related protein. This is Apolipoprotein C-I (APOC1) from Eidolon helvum (Straw-colored fruit bat).